The chain runs to 267 residues: Diacetylchitobiose deacetylase (267 aa).

It belongs to the PIGL family. Homohexamer.

It localises to the cytoplasm. It carries out the reaction N,N'-diacetylchitobiose + H2O = beta-D-glucosaminyl-(1-&gt;4)-N-acetyl-D-glucosamine + acetate. It participates in glycan degradation; chitin degradation. Deacylates the non-reducing end of diacetylchitobiose (GlcNAc2). Can also use N-acetylglucosamine (GlcNAc) and N-acetylchitotriose (GlcNAc3). Probably involved in chitin degradation. The protein is Diacetylchitobiose deacetylase (dac) of Thermococcus kodakarensis (strain ATCC BAA-918 / JCM 12380 / KOD1) (Pyrococcus kodakaraensis (strain KOD1)).